The chain runs to 207 residues: Succinyl-CoA:3-ketoacid coenzyme A transferase subunit B (207 aa).

Glu43 is an active-site residue.

This sequence belongs to the 3-oxoacid CoA-transferase subunit B family. As to quaternary structure, heterodimer of a subunit A and a subunit B.

It catalyses the reaction a 3-oxo acid + succinyl-CoA = a 3-oxoacyl-CoA + succinate. This chain is Succinyl-CoA:3-ketoacid coenzyme A transferase subunit B (scoB), found in Helicobacter pylori (strain J99 / ATCC 700824) (Campylobacter pylori J99).